Here is a 291-residue protein sequence, read N- to C-terminus: RPE-retinal G protein-coupled receptor (291 aa).

The Extracellular segment spans residues 1 to 15 (MAETSALPTGFGELE). A helical membrane pass occupies residues 16-36 (VLAVGMVLLVEALSGLSLNTL). Over 37–52 (TIFSFCKTPELRTPCH) the chain is Cytoplasmic. A helical membrane pass occupies residues 53–73 (LLVLSLALADSGISLNALVAA). The Extracellular portion of the chain corresponds to 74–91 (TSSLLRRWPYGSDGCQAH). A disulfide bridge links Cys88 with Cys162. Residues 92–112 (GFQGFVTALASICSSAAIAWG) form a helical membrane-spanning segment. At 113 to 130 (RYHHYCTRSQLAWNSAVS) the chain is on the cytoplasmic side. Residues 131–151 (LVLFVWLSSAFWAALPLLGWG) form a helical membrane-spanning segment. Residues 152–175 (HYDYEPLGTCCTLDYSKGDRNFTS) lie on the Extracellular side of the membrane. Residue Asn172 is glycosylated (N-linked (GlcNAc...) asparagine). A helical membrane pass occupies residues 176 to 196 (FLFTMSFFNFAMPLFITITSY). The Cytoplasmic segment spans residues 197–219 (SLMEQKLGKSGHLQVNTTLPART). Residues 220-240 (LLLGWGPYAILYLYAVIADVT) form a helical membrane-spanning segment. Residues 241–247 (SISPKLQ) are Extracellular-facing. Residues 248–268 (MVPALIAKMVPTINAINYALG) form a helical membrane-spanning segment. An N6-(retinylidene)lysine modification is found at Lys255. The Cytoplasmic segment spans residues 269–291 (NEMVCRGIWQCLSPQKREKDRTK).

This sequence belongs to the G-protein coupled receptor 1 family. Opsin subfamily. In terms of processing, covalently binds all-trans- and 11-cis-retinal. In terms of tissue distribution, preferentially expressed at high levels in the retinal pigment epithelium (RPE) and Mueller cells of the neural retina.

The protein resides in the membrane. Receptor for all-trans- and 11-cis-retinal. Binds preferentially to the former and may catalyze the isomerization of the chromophore by a retinochrome-like mechanism. This is RPE-retinal G protein-coupled receptor (RGR) from Homo sapiens (Human).